The sequence spans 140 residues: Nucleoside diphosphate kinase (140 aa).

ATP contacts are provided by lysine 11, phenylalanine 59, arginine 87, threonine 93, arginine 104, and asparagine 114. The active-site Pros-phosphohistidine intermediate is histidine 117.

The protein belongs to the NDK family. In terms of assembly, homotetramer. Mg(2+) serves as cofactor.

It localises to the cytoplasm. The enzyme catalyses a 2'-deoxyribonucleoside 5'-diphosphate + ATP = a 2'-deoxyribonucleoside 5'-triphosphate + ADP. The catalysed reaction is a ribonucleoside 5'-diphosphate + ATP = a ribonucleoside 5'-triphosphate + ADP. Major role in the synthesis of nucleoside triphosphates other than ATP. The ATP gamma phosphate is transferred to the NDP beta phosphate via a ping-pong mechanism, using a phosphorylated active-site intermediate. In Sphingopyxis alaskensis (strain DSM 13593 / LMG 18877 / RB2256) (Sphingomonas alaskensis), this protein is Nucleoside diphosphate kinase.